The chain runs to 263 residues: Histidine racemase (263 aa).

Catalysis depends on cysteine 67, which acts as the Proton acceptor. Cysteine 209 serves as the catalytic Proton donor.

Belongs to the histidine racemase family. In terms of assembly, homodimer.

It catalyses the reaction L-histidine = D-histidine. In terms of biological role, cofactor-independent isomerase that catalyzes the reversible conversion of L-histidine to D-histidine. May play a role in growth of F.nucleatum. This is Histidine racemase from Fusobacterium nucleatum subsp. nucleatum (strain ATCC 23726 / VPI 4351).